The sequence spans 345 residues: Guanine nucleotide-binding protein alpha-4 subunit (345 aa).

One can recognise a G-alpha domain in the interval 30–345; it reads KDVKLLLLGP…TILSQALEHF (316 aa). The segment at 33–46 is G1 motif; the sequence is KLLLLGPGESGKST. GTP contacts are provided by residues 38–45, 171–177, 196–200, 265–268, and alanine 320; these read GPGESGKS, LRCRVRT, DVGGQ, and NKKD. Positions 45 and 177 each coordinate Mg(2+). A G2 motif region spans residues 169–177; sequence DVLRCRVRT. The segment at 192–201 is G3 motif; sequence LKIVDVGGQR. Residues 261-268 are G4 motif; the sequence is VLFLNKKD. The interval 318 to 323 is G5 motif; it reads TCAVDT.

Belongs to the G-alpha family. G proteins are composed of 3 units; alpha, beta and gamma. The alpha chain contains the guanine nucleotide binding site.

Its function is as follows. Guanine nucleotide-binding proteins (G proteins) are involved as modulators or transducers in various transmembrane signaling systems. G alpha-4 plays a role in morphogenesis of the multicellular structure. The protein is Guanine nucleotide-binding protein alpha-4 subunit (gpaD) of Dictyostelium discoideum (Social amoeba).